The chain runs to 710 residues: Interferon-induced GTP-binding protein Mx2 (710 aa).

The interval 1–87 is disordered; the sequence is MSLSFRPLKY…RSKGPENNLY (87 aa). Polar residues-rich tracts occupy residues 39 to 50 and 58 to 79; these read QTMSPPQWQVEE and NNFS…QQRS. Residues 112-383 enclose the Dynamin-type G domain; that stretch reads DLALPAIAVI…LIWHINKSLP (272 aa). Positions 122–129 are G1 motif; sequence GDQSSGKS. GTP is bound at residue 122-129; sequence GDQSSGKS. The interval 147-149 is G2 motif; sequence ITR. Positions 221-224 are G3 motif; that stretch reads DLPG. Residues 221 to 225 and 290 to 293 each bind GTP; these read DLPGI and TKPD. Residues 290–293 are G4 motif; the sequence is TKPD. The segment at 322 to 325 is G5 motif; sequence KCRG. One can recognise a GED domain in the interval 619 to 710; that stretch reads IVEIGVHLNA…ALYEFPHFKG (92 aa).

Belongs to the TRAFAC class dynamin-like GTPase superfamily. Dynamin/Fzo/YdjA family.

It is found in the cytoplasm. The protein resides in the nucleus. Functionally, interferon-induced dynamin-like GTPase with antiviral activity against vesicular stomatitis virus (VSV). The chain is Interferon-induced GTP-binding protein Mx2 (MX2) from Bubalus bubalis (Domestic water buffalo).